Consider the following 119-residue polypeptide: Large ribosomal subunit protein bL20 (119 aa).

It belongs to the bacterial ribosomal protein bL20 family.

Binds directly to 23S ribosomal RNA and is necessary for the in vitro assembly process of the 50S ribosomal subunit. It is not involved in the protein synthesizing functions of that subunit. The sequence is that of Large ribosomal subunit protein bL20 from Thermoanaerobacter sp. (strain X514).